A 432-amino-acid polypeptide reads, in one-letter code: D-amino acid dehydrogenase 1 (432 aa).

Residue 3-17 participates in FAD binding; that stretch reads VLILGSGVVGTVSAY.

It belongs to the DadA oxidoreductase family. The cofactor is FAD.

It carries out the reaction a D-alpha-amino acid + A + H2O = a 2-oxocarboxylate + AH2 + NH4(+). Oxidative deamination of D-amino acids. This chain is D-amino acid dehydrogenase 1 (dadA1), found in Pseudomonas putida (strain ATCC 47054 / DSM 6125 / CFBP 8728 / NCIMB 11950 / KT2440).